Reading from the N-terminus, the 204-residue chain is Small heat shock protein, chloroplastic (204 aa).

Positions 34–55 (QMGRVDHDHELDDRSNRAPISR) are disordered. Residues 37 to 49 (RVDHDHELDDRSN) are compositionally biased toward basic and acidic residues. The sHSP domain occupies 98 to 204 (GSGRAMRRGW…KKDVFQVMVD (107 aa)).

The protein belongs to the small heat shock protein (HSP20) family.

The protein resides in the plastid. Its subcellular location is the chloroplast stroma. The sequence is that of Small heat shock protein, chloroplastic (HSP23) from Oxybasis rubra (Red goosefoot).